Reading from the N-terminus, the 511-residue chain is Histidine ammonia-lyase (511 aa).

The segment at residues 142-144 (ASG) is a cross-link (5-imidazolinone (Ala-Gly)). 2,3-didehydroalanine (Ser) is present on S143.

Belongs to the PAL/histidase family. Post-translationally, contains an active site 4-methylidene-imidazol-5-one (MIO), which is formed autocatalytically by cyclization and dehydration of residues Ala-Ser-Gly.

It localises to the cytoplasm. It catalyses the reaction L-histidine = trans-urocanate + NH4(+). Its pathway is amino-acid degradation; L-histidine degradation into L-glutamate; N-formimidoyl-L-glutamate from L-histidine: step 1/3. The protein is Histidine ammonia-lyase of Brucella suis biovar 1 (strain 1330).